Here is a 625-residue protein sequence, read N- to C-terminus: Prothrombin (625 aa).

The N-terminal stretch at 1 to 24 (MARVRGPRLPGCLALAALFSLVHS) is a signal peptide. A propeptide spanning residues 25 to 43 (QHVFLAHQQASSLLQRARR) is cleaved from the precursor. Residues 44–90 (ANKGFLEEVRKGNLERECLEEPCSREEAFEALESLSATDAFWAKYTA) form the Gla domain. Residues Glu-50, Glu-51, Glu-58, Glu-60, Glu-63, Glu-64, Glu-69, Glu-70, Glu-73, and Glu-76 each carry the 4-carboxyglutamate modification. A disulfide bridge connects residues Cys-61 and Cys-66. Disulfide bonds link Cys-91/Cys-104, Cys-109/Cys-187, Cys-130/Cys-170, Cys-158/Cys-182, Cys-214/Cys-292, Cys-235/Cys-275, Cys-263/Cys-287, Cys-339/Cys-485, Cys-394/Cys-410, Cys-539/Cys-553, and Cys-567/Cys-597. 2 Kringle domains span residues 109 to 187 (CAEG…VPVC) and 214 to 292 (CVPD…LNYC). N-linked (GlcNAc...) asparagine glycans are attached at residues Asn-120 and Asn-144. A Peptidase S1 domain is found at 367 to 621 (IVEGQDAEVG…LKKWIQKVID (255 aa)). His-409 acts as the Charge relay system in catalysis. A glycan (N-linked (GlcNAc...) asparagine) is linked at Asn-419. Catalysis depends on Asp-465, which acts as the Charge relay system. A high affinity receptor-binding region which is also known as the TP508 peptide region spans residues 554-576 (AGYKPGEGKRGDACEGDSGGPFV). Ser-571 acts as the Charge relay system in catalysis.

Belongs to the peptidase S1 family. Heterodimer (named alpha-thrombin) of a light and a heavy chain; disulfide-linked. Forms a heterodimer with SERPINA5. In plasma, interacts (via N-terminus) with alpha-1-microglobulin; this interaction does not prevent the activation of prothrombin to thrombin. The gamma-carboxyglutamyl residues, which bind calcium ions, result from the carboxylation of glutamyl residues by a microsomal enzyme, the vitamin K-dependent carboxylase. The modified residues are necessary for the calcium-dependent interaction with a negatively charged phospholipid surface, which is essential for the conversion of prothrombin to thrombin. In terms of processing, in the penultimate step of the coagulation cascade, prothrombin is converted to thrombin by the prothrombinase complex composed of factor Xa (F10), cofactor Va (F5), and phospholipids. This activation requires factor Xa-catalyzed sequential cleavage at 2 sites, Arg-317 and Arg-366, along 2 possible pathways. In the first pathway, the first cleavage occurs at Arg-317, leading to the formation of the inactive intermediate prethrombin-2. This pathway preferentially occurs on platelets and in the absence of cofactor Va. In the second pathway, the first cleavage occurs at Arg-366, which separates protease domain into 2 chains that remain connected through a disulfide bond and generates the active intermediate meizothrombin. The presence of cofactor Va directs activation along the meizothrombin pathway and greatly accelerates the rate of cleavage at Arg-366, but has a smaller effect on the cleavage of meizothrombin at Arg-317. Meizothrombin accumulates as an intermediate when prothrombinase is assembled on the membrane of red blood cells. Expressed by the liver and secreted in plasma.

The protein localises to the secreted. It localises to the extracellular space. The enzyme catalyses Selective cleavage of Arg-|-Gly bonds in fibrinogen to form fibrin and release fibrinopeptides A and B.. Its activity is regulated as follows. Activity is promoted in the presence of negatively charged surfaces, such as polyphosphate and dextran sulfate. Inhibited by SERPINA5. Its function is as follows. Thrombin, which cleaves bonds after Arg and Lys, converts fibrinogen to fibrin and activates factors V, VII, VIII, XIII, and, in complex with thrombomodulin, protein C. Functions in blood homeostasis, inflammation and wound healing. Activates coagulation factor XI (F11); activation is promoted by the contact with negatively charged surfaces. Triggers the production of pro-inflammatory cytokines, such as MCP-1/CCL2 and IL8/CXCL8, in endothelial cells. In Bos taurus (Bovine), this protein is Prothrombin (F2).